Reading from the N-terminus, the 1092-residue chain is Isoleucine--tRNA ligase (1092 aa).

Residues 53–63 carry the 'HIGH' region motif; that stretch reads PFANGLPHYGH. The 'KMSKS' region signature appears at 613–617; that stretch reads KLSKR. K616 lines the ATP pocket.

The protein belongs to the class-I aminoacyl-tRNA synthetase family. IleS type 2 subfamily. In terms of assembly, monomer. Zn(2+) is required as a cofactor.

It is found in the cytoplasm. It carries out the reaction tRNA(Ile) + L-isoleucine + ATP = L-isoleucyl-tRNA(Ile) + AMP + diphosphate. In terms of biological role, catalyzes the attachment of isoleucine to tRNA(Ile). As IleRS can inadvertently accommodate and process structurally similar amino acids such as valine, to avoid such errors it has two additional distinct tRNA(Ile)-dependent editing activities. One activity is designated as 'pretransfer' editing and involves the hydrolysis of activated Val-AMP. The other activity is designated 'posttransfer' editing and involves deacylation of mischarged Val-tRNA(Ile). The polypeptide is Isoleucine--tRNA ligase (Rickettsia africae (strain ESF-5)).